Consider the following 161-residue polypeptide: Endoribonuclease YbeY (161 aa).

3 residues coordinate Zn(2+): H121, H125, and H131.

The protein belongs to the endoribonuclease YbeY family. It depends on Zn(2+) as a cofactor.

Its subcellular location is the cytoplasm. Its function is as follows. Single strand-specific metallo-endoribonuclease involved in late-stage 70S ribosome quality control and in maturation of the 3' terminus of the 16S rRNA. The chain is Endoribonuclease YbeY from Xylella fastidiosa (strain M23).